Consider the following 417-residue polypeptide: 4-hydroxy-3-methylbut-2-en-1-yl diphosphate synthase (flavodoxin) (417 aa).

[4Fe-4S] cluster contacts are provided by Cys304, Cys307, Cys350, and Glu357.

It belongs to the IspG family. [4Fe-4S] cluster is required as a cofactor.

It carries out the reaction (2E)-4-hydroxy-3-methylbut-2-enyl diphosphate + oxidized [flavodoxin] + H2O + 2 H(+) = 2-C-methyl-D-erythritol 2,4-cyclic diphosphate + reduced [flavodoxin]. It functions in the pathway isoprenoid biosynthesis; isopentenyl diphosphate biosynthesis via DXP pathway; isopentenyl diphosphate from 1-deoxy-D-xylulose 5-phosphate: step 5/6. Functionally, converts 2C-methyl-D-erythritol 2,4-cyclodiphosphate (ME-2,4cPP) into 1-hydroxy-2-methyl-2-(E)-butenyl 4-diphosphate. The sequence is that of 4-hydroxy-3-methylbut-2-en-1-yl diphosphate synthase (flavodoxin) from Rhizobium meliloti (strain 1021) (Ensifer meliloti).